The primary structure comprises 438 residues: 23S rRNA (uracil(1939)-C(5))-methyltransferase RlmD (438 aa).

Residues 10 to 69 enclose the TRAM domain; it reads KASVNTKHQSVDVVRLDHNGAGIAFVDKKPVFIEGALPGEKAIIQFIEQKKQFSRAKLIK. Positions 82, 88, 91, and 169 each coordinate [4Fe-4S] cluster. Residues Gln-272, Phe-301, Asn-306, Glu-322, Asn-349, and Asp-370 each contribute to the S-adenosyl-L-methionine site. Cys-396 (nucleophile) is an active-site residue.

Belongs to the class I-like SAM-binding methyltransferase superfamily. RNA M5U methyltransferase family. RlmD subfamily.

The enzyme catalyses uridine(1939) in 23S rRNA + S-adenosyl-L-methionine = 5-methyluridine(1939) in 23S rRNA + S-adenosyl-L-homocysteine + H(+). Catalyzes the formation of 5-methyl-uridine at position 1939 (m5U1939) in 23S rRNA. This is 23S rRNA (uracil(1939)-C(5))-methyltransferase RlmD from Aliivibrio fischeri (strain ATCC 700601 / ES114) (Vibrio fischeri).